The following is a 288-amino-acid chain: Hypersensitive-induced response protein-like protein 1 (288 aa).

Residue Gly-2 is the site of N-myristoyl glycine attachment.

Its function is as follows. Positive regulator of hypersensitive response (HR)-like cell death. May be involved in potassium ion channel regulation. The chain is Hypersensitive-induced response protein-like protein 1 from Oryza sativa subsp. japonica (Rice).